The sequence spans 2285 residues: Protein Ycf2 (2285 aa).

1638–1645 (GSIGTGRS) is an ATP binding site.

This sequence belongs to the Ycf2 family.

Its subcellular location is the plastid. The protein resides in the chloroplast stroma. Its function is as follows. Probable ATPase of unknown function. Its presence in a non-photosynthetic plant (Epifagus virginiana) and experiments in tobacco indicate that it has an essential function which is probably not related to photosynthesis. In Populus trichocarpa (Western balsam poplar), this protein is Protein Ycf2.